A 241-amino-acid chain; its full sequence is MRLVEFYSEKKVCSYIDSKQSIFRYFHIQNVTPSFYYGLLERGWRRFGNYFFTPMCEGCTDCISIRTLIDDFTFSRNHKRLLKKAQNIDIYIQKPTITQAHIELYNRYHRVMRDKKGWEYTPTTPESYMDMFVEGHQDFGYEILYFIDSQLVGVGLVDALFDSITAVYFYYDHTFAHHSLGTLNILKQIQIGKENGLKYFYPGYWIKDHYCMGYKQRFTPFEVLKNIPDVFEAPIWEMYNG.

It belongs to the R-transferase family. Bpt subfamily.

The protein resides in the cytoplasm. It catalyses the reaction N-terminal L-glutamyl-[protein] + L-leucyl-tRNA(Leu) = N-terminal L-leucyl-L-glutamyl-[protein] + tRNA(Leu) + H(+). The catalysed reaction is N-terminal L-aspartyl-[protein] + L-leucyl-tRNA(Leu) = N-terminal L-leucyl-L-aspartyl-[protein] + tRNA(Leu) + H(+). Functionally, functions in the N-end rule pathway of protein degradation where it conjugates Leu from its aminoacyl-tRNA to the N-termini of proteins containing an N-terminal aspartate or glutamate. The chain is Aspartate/glutamate leucyltransferase from Helicobacter hepaticus (strain ATCC 51449 / 3B1).